Reading from the N-terminus, the 447-residue chain is MESRSILETIQMVAEENLDIRTITMGISLFDCVDSDGERARQKIYDKITTSAKDLVKVAAQIQEEYGIPIINKRIAVTPIALIAAASQDQDYVAYAVTMERAAQALGVDLIGGFSALVQKGYQSGDRKLIASIPAALAATSRVCSSVNVGSTRAGINLDAVGEMGRIIKQIAADDPVNCMSLVVFANAVDDNPFMAGAFHGVGEADRVINVGISGPGVVKRALEEVRGQSIDIVSEQIKKTAFKVTRMGQFVGSIASERLHVPFGIVDLSLAPTPNEGDSVAEILEEIGLESVGAPGTTAALALLNDAVKKGGVMACEHVGGLSGAFIPVSEDAEMIRAVSAGRLNIEKLEAMTAVCSVGLDMIAVPGDTSAATISGMIADEAAIGMINNKTTAVRVIPATGKGVGDAVEFGGLFGQAPVMPVNTNQPTTFIKRGGHIPAPIHSFKN.

Belongs to the UPF0210 family. Homodimer.

The chain is UPF0210 protein lp_2507 from Lactiplantibacillus plantarum (strain ATCC BAA-793 / NCIMB 8826 / WCFS1) (Lactobacillus plantarum).